Consider the following 105-residue polypeptide: MSKIKKGDDVIVIAGKDKGKRGTVLRVMKPDLVVVEGVNRLKKHQRPNPNKGDTGGIVEMDSPIQVSNIAIYNPATRKADRIGFKTVEGKGKARCFRSNEELIDA.

Belongs to the universal ribosomal protein uL24 family. Part of the 50S ribosomal subunit.

In terms of biological role, one of two assembly initiator proteins, it binds directly to the 5'-end of the 23S rRNA, where it nucleates assembly of the 50S subunit. One of the proteins that surrounds the polypeptide exit tunnel on the outside of the subunit. The sequence is that of Large ribosomal subunit protein uL24 from Nitrosospira multiformis (strain ATCC 25196 / NCIMB 11849 / C 71).